We begin with the raw amino-acid sequence, 1953 residues long: Putative surface-exposed virulence protein BigA (1953 aa).

The signal sequence occupies residues 1–27; the sequence is MNPMQKKKLISIAIALTLQSYYIPAIA. Disordered stretches follow at residues 31–50, 88–258, and 1496–1517; these read NDDE…EKRA, GGGD…TFSN, and TTAP…PQQL. A 1; truncated repeat occupies 101–103; that stretch reads PDN. The tract at residues 101-252 is 15 X 11 AA tandem repeats; sequence PDNGGDVTPP…DDDDTPPDDS (152 aa). The 2; truncated repeat unit spans residues 104–113; that stretch reads GGDVTPPDDG. The 3; truncated repeat unit spans residues 114-122; it reads GNVTPPDDG. Tandem repeats lie at residues 123-133, 134-144, 145-155, 156-166, 167-177, 178-188, 189-199, 200-210, 211-221, 222-232, and 233-243. 2 stretches are compositionally biased toward acidic residues: residues 141-177 and 185-249; these read DSGD…DSGD and DSGD…DTPP. Residues 244-252 form a 15; truncated repeat; that stretch reads DDDTPPDDS. The 304-residue stretch at 1649–1952 folds into the Autotransporter domain; it reads SGAQATTVFR…GFMLNVKKTF (304 aa).

The polypeptide is Putative surface-exposed virulence protein BigA (bigA) (Salmonella typhimurium (strain LT2 / SGSC1412 / ATCC 700720)).